We begin with the raw amino-acid sequence, 302 residues long: Phospho-N-acetylmuramoyl-pentapeptide-transferase (302 aa).

Helical transmembrane passes span 1–21, 42–62, 67–87, 101–121, 123–143, 154–174, 178–198, 204–224, 229–249, and 279–299; these read MIAA…NLFR, GTPT…GVLS, VILT…FLSI, ALLQ…ETAV, FFGI…IVIV, GLDG…WFFL, GFSE…LIFN, IFMG…VSVL, FYLI…ILQI, and IVAV…EVFG.

The protein belongs to the glycosyltransferase 4 family. MraY subfamily. Mg(2+) serves as cofactor.

The protein localises to the cell inner membrane. The enzyme catalyses UDP-N-acetyl-alpha-D-muramoyl-L-alanyl-gamma-D-glutamyl-meso-2,6-diaminopimeloyl-D-alanyl-D-alanine + di-trans,octa-cis-undecaprenyl phosphate = di-trans,octa-cis-undecaprenyl diphospho-N-acetyl-alpha-D-muramoyl-L-alanyl-D-glutamyl-meso-2,6-diaminopimeloyl-D-alanyl-D-alanine + UMP. It functions in the pathway cell wall biogenesis; peptidoglycan biosynthesis. Its function is as follows. Catalyzes the initial step of the lipid cycle reactions in the biosynthesis of the cell wall peptidoglycan: transfers peptidoglycan precursor phospho-MurNAc-pentapeptide from UDP-MurNAc-pentapeptide onto the lipid carrier undecaprenyl phosphate, yielding undecaprenyl-pyrophosphoryl-MurNAc-pentapeptide, known as lipid I. This chain is Phospho-N-acetylmuramoyl-pentapeptide-transferase, found in Thermotoga neapolitana (strain ATCC 49049 / DSM 4359 / NBRC 107923 / NS-E).